Here is a 259-residue protein sequence, read N- to C-terminus: 7-cyano-7-deazaguanine synthase (259 aa).

32–42 (LSGGLDSVTCL) is an ATP binding site. Zn(2+) is bound by residues cysteine 223, cysteine 233, cysteine 236, and cysteine 239.

The protein belongs to the QueC family. Zn(2+) is required as a cofactor.

The catalysed reaction is 7-carboxy-7-deazaguanine + NH4(+) + ATP = 7-cyano-7-deazaguanine + ADP + phosphate + H2O + H(+). The protein operates within purine metabolism; 7-cyano-7-deazaguanine biosynthesis. Its function is as follows. Catalyzes the ATP-dependent conversion of 7-carboxy-7-deazaguanine (CDG) to 7-cyano-7-deazaguanine (preQ(0)). The chain is 7-cyano-7-deazaguanine synthase from Psychrobacter arcticus (strain DSM 17307 / VKM B-2377 / 273-4).